The sequence spans 340 residues: UDP-N-acetylglucosamine--N-acetylmuramyl-(pentapeptide) pyrophosphoryl-undecaprenol N-acetylglucosamine transferase (340 aa).

UDP-N-acetyl-alpha-D-glucosamine is bound by residues threonine 10–glycine 12, asparagine 110, serine 171, and glutamine 272.

It belongs to the glycosyltransferase 28 family. MurG subfamily.

The protein localises to the cell membrane. It catalyses the reaction di-trans,octa-cis-undecaprenyl diphospho-N-acetyl-alpha-D-muramoyl-L-alanyl-D-glutamyl-meso-2,6-diaminopimeloyl-D-alanyl-D-alanine + UDP-N-acetyl-alpha-D-glucosamine = di-trans,octa-cis-undecaprenyl diphospho-[N-acetyl-alpha-D-glucosaminyl-(1-&gt;4)]-N-acetyl-alpha-D-muramoyl-L-alanyl-D-glutamyl-meso-2,6-diaminopimeloyl-D-alanyl-D-alanine + UDP + H(+). The protein operates within cell wall biogenesis; peptidoglycan biosynthesis. Cell wall formation. Catalyzes the transfer of a GlcNAc subunit on undecaprenyl-pyrophosphoryl-MurNAc-pentapeptide (lipid intermediate I) to form undecaprenyl-pyrophosphoryl-MurNAc-(pentapeptide)GlcNAc (lipid intermediate II). The sequence is that of UDP-N-acetylglucosamine--N-acetylmuramyl-(pentapeptide) pyrophosphoryl-undecaprenol N-acetylglucosamine transferase from Wolbachia pipientis subsp. Culex pipiens (strain wPip).